A 647-amino-acid chain; its full sequence is Acetyl-coenzyme A synthetase (647 aa).

Residues 190–193 (RGGK), Thr310, and Asn334 contribute to the CoA site. ATP contacts are provided by residues 386–388 (GEP), 410–415 (DTWWQT), Asp499, and Arg514. Ser522 provides a ligand contact to CoA. Arg525 is an ATP binding site. Val536, His538, and Val541 together coordinate Mg(2+). Arg583 serves as a coordination point for CoA. Position 608 is an N6-acetyllysine (Lys608).

The protein belongs to the ATP-dependent AMP-binding enzyme family. The cofactor is Mg(2+). In terms of processing, acetylated. Deacetylation by the SIR2-homolog deacetylase activates the enzyme.

It carries out the reaction acetate + ATP + CoA = acetyl-CoA + AMP + diphosphate. Functionally, catalyzes the conversion of acetate into acetyl-CoA (AcCoA), an essential intermediate at the junction of anabolic and catabolic pathways. AcsA undergoes a two-step reaction. In the first half reaction, AcsA combines acetate with ATP to form acetyl-adenylate (AcAMP) intermediate. In the second half reaction, it can then transfer the acetyl group from AcAMP to the sulfhydryl group of CoA, forming the product AcCoA. This Xanthomonas axonopodis pv. citri (strain 306) protein is Acetyl-coenzyme A synthetase.